The sequence spans 278 residues: Large ribosomal subunit protein uL2 (278 aa).

The tract at residues Arg-218 to Lys-278 is disordered.

The protein belongs to the universal ribosomal protein uL2 family. Part of the 50S ribosomal subunit. Forms a bridge to the 30S subunit in the 70S ribosome.

Functionally, one of the primary rRNA binding proteins. Required for association of the 30S and 50S subunits to form the 70S ribosome, for tRNA binding and peptide bond formation. It has been suggested to have peptidyltransferase activity; this is somewhat controversial. Makes several contacts with the 16S rRNA in the 70S ribosome. The protein is Large ribosomal subunit protein uL2 of Rhizobium etli (strain CIAT 652).